A 328-amino-acid polypeptide reads, in one-letter code: Formimidoylglutamase (328 aa).

Positions 133, 159, 161, 163, 253, and 255 each coordinate Mn(2+).

Belongs to the arginase family. Mn(2+) serves as cofactor.

The enzyme catalyses N-formimidoyl-L-glutamate + H2O = formamide + L-glutamate. It functions in the pathway amino-acid degradation; L-histidine degradation into L-glutamate; L-glutamate from N-formimidoyl-L-glutamate (hydrolase route): step 1/1. In terms of biological role, catalyzes the conversion of N-formimidoyl-L-glutamate to L-glutamate and formamide. This Streptococcus pyogenes serotype M18 (strain MGAS8232) protein is Formimidoylglutamase.